The following is a 166-amino-acid chain: Endoribonuclease YbeY (166 aa).

Positions 129, 133, and 139 each coordinate Zn(2+).

It belongs to the endoribonuclease YbeY family. The cofactor is Zn(2+).

It localises to the cytoplasm. Its function is as follows. Single strand-specific metallo-endoribonuclease involved in late-stage 70S ribosome quality control and in maturation of the 3' terminus of the 16S rRNA. The chain is Endoribonuclease YbeY from Heliobacterium modesticaldum (strain ATCC 51547 / Ice1).